Consider the following 147-residue polypeptide: Deoxyuridine 5'-triphosphate nucleotidohydrolase (147 aa).

Residues 63–65 (RSG), Asn-76, and 80–82 (TID) each bind substrate.

Belongs to the dUTPase family. Mg(2+) serves as cofactor.

It catalyses the reaction dUTP + H2O = dUMP + diphosphate + H(+). Its pathway is pyrimidine metabolism; dUMP biosynthesis; dUMP from dCTP (dUTP route): step 2/2. Its function is as follows. This enzyme is involved in nucleotide metabolism: it produces dUMP, the immediate precursor of thymidine nucleotides and it decreases the intracellular concentration of dUTP so that uracil cannot be incorporated into DNA. The polypeptide is Deoxyuridine 5'-triphosphate nucleotidohydrolase (Chlamydia caviae (strain ATCC VR-813 / DSM 19441 / 03DC25 / GPIC) (Chlamydophila caviae)).